Here is a 426-residue protein sequence, read N- to C-terminus: 3-phosphoshikimate 1-carboxyvinyltransferase (426 aa).

3-phosphoshikimate is bound by residues Lys-22, Ser-23, and Arg-27. Position 22 (Lys-22) interacts with phosphoenolpyruvate. Gly-96 and Arg-124 together coordinate phosphoenolpyruvate. 3-phosphoshikimate-binding residues include Ser-170, Ser-171, Gln-172, Ser-198, Asp-314, Asn-337, and Lys-341. A phosphoenolpyruvate-binding site is contributed by Gln-172. Asp-314 acts as the Proton acceptor in catalysis. Phosphoenolpyruvate contacts are provided by Arg-345, Arg-387, and Lys-412.

Belongs to the EPSP synthase family. In terms of assembly, monomer.

The protein localises to the cytoplasm. It carries out the reaction 3-phosphoshikimate + phosphoenolpyruvate = 5-O-(1-carboxyvinyl)-3-phosphoshikimate + phosphate. It participates in metabolic intermediate biosynthesis; chorismate biosynthesis; chorismate from D-erythrose 4-phosphate and phosphoenolpyruvate: step 6/7. Its function is as follows. Catalyzes the transfer of the enolpyruvyl moiety of phosphoenolpyruvate (PEP) to the 5-hydroxyl of shikimate-3-phosphate (S3P) to produce enolpyruvyl shikimate-3-phosphate and inorganic phosphate. In Shewanella loihica (strain ATCC BAA-1088 / PV-4), this protein is 3-phosphoshikimate 1-carboxyvinyltransferase.